The primary structure comprises 161 residues: Glycine cleavage system H protein 2 (161 aa).

A Lipoyl-binding domain is found at 34–116 (TVTVGVTDIG…YGEGWIAKLK (83 aa)). Lys75 carries the post-translational modification N6-lipoyllysine.

This sequence belongs to the GcvH family. The glycine cleavage system is composed of four proteins: P, T, L and H. (R)-lipoate is required as a cofactor.

The glycine cleavage system catalyzes the degradation of glycine. The H protein shuttles the methylamine group of glycine from the P protein to the T protein. This is Glycine cleavage system H protein 2 from Aquifex aeolicus (strain VF5).